Here is a 377-residue protein sequence, read N- to C-terminus: Succinyl-diaminopimelate desuccinylase (377 aa).

Residue His-68 participates in Zn(2+) binding. The active site involves Asp-70. Zn(2+) is bound at residue Asp-101. The active-site Proton acceptor is the Glu-135. Zn(2+) contacts are provided by Glu-136, Glu-164, and His-350.

It belongs to the peptidase M20A family. DapE subfamily. In terms of assembly, homodimer. It depends on Zn(2+) as a cofactor. The cofactor is Co(2+).

The catalysed reaction is N-succinyl-(2S,6S)-2,6-diaminopimelate + H2O = (2S,6S)-2,6-diaminopimelate + succinate. It participates in amino-acid biosynthesis; L-lysine biosynthesis via DAP pathway; LL-2,6-diaminopimelate from (S)-tetrahydrodipicolinate (succinylase route): step 3/3. In terms of biological role, catalyzes the hydrolysis of N-succinyl-L,L-diaminopimelic acid (SDAP), forming succinate and LL-2,6-diaminopimelate (DAP), an intermediate involved in the bacterial biosynthesis of lysine and meso-diaminopimelic acid, an essential component of bacterial cell walls. The chain is Succinyl-diaminopimelate desuccinylase from Aliivibrio salmonicida (strain LFI1238) (Vibrio salmonicida (strain LFI1238)).